Reading from the N-terminus, the 432-residue chain is Ectonucleoside triphosphate diphosphohydrolase 5 (432 aa).

The first 24 residues, 1-24 (MALYQGAAFFMLVASCVCSTVFHR), serve as a signal peptide directing secretion. Glu175 acts as the Proton acceptor in catalysis. An N-linked (GlcNAc...) asparagine glycan is attached at Asn235. Cystine bridges form between Cys275–Cys307 and Cys367–Cys381. Residue Asn372 is glycosylated (N-linked (GlcNAc...) asparagine).

The protein belongs to the GDA1/CD39 NTPase family. In terms of assembly, monomer; active form. Homodimer; disulfide-linked. Homodimers are enzymatically inactive. Requires Ca(2+) as cofactor. Mg(2+) is required as a cofactor. N-glycosylated; high-mannose type.

The protein resides in the endoplasmic reticulum. It is found in the secreted. It catalyses the reaction a ribonucleoside 5'-diphosphate + H2O = a ribonucleoside 5'-phosphate + phosphate + H(+). It carries out the reaction GDP + H2O = GMP + phosphate + H(+). The catalysed reaction is UDP + H2O = UMP + phosphate + H(+). The enzyme catalyses IDP + H2O = IMP + phosphate + H(+). It catalyses the reaction CDP + H2O = CMP + phosphate + H(+). It carries out the reaction ADP + H2O = AMP + phosphate + H(+). It functions in the pathway protein modification; protein glycosylation. Functionally, hydrolyzes nucleoside diphosphates with a preference for GDP, IDP and UDP compared to ADP and CDP. In the lumen of the endoplasmic reticulum, hydrolyzes UDP that acts as an end-product feedback inhibitor of the UDP-Glc:glycoprotein glucosyltransferases. UMP can be transported back by an UDP-sugar antiporter to the cytosol where it is consumed to regenerate UDP-glucose. Therefore, it positively regulates protein reglucosylation by clearing UDP from the ER lumen and by promoting the regeneration of UDP-glucose. Protein reglucosylation is essential to proper glycoprotein folding and quality control in the ER. This Bos taurus (Bovine) protein is Ectonucleoside triphosphate diphosphohydrolase 5 (ENTPD5).